Here is a 257-residue protein sequence, read N- to C-terminus: UPF0246 protein Mpe_A2092 (257 aa).

This sequence belongs to the UPF0246 family.

This chain is UPF0246 protein Mpe_A2092, found in Methylibium petroleiphilum (strain ATCC BAA-1232 / LMG 22953 / PM1).